A 167-amino-acid chain; its full sequence is MLNKELLDALNEQMNHEFYAAHAYMAMAAFCDDNSYEGFANFYIQQAKEERFHGKKIYDYINDRGEHALFTAIPAPKTEFSSILETFEDGLAQEQDVTHRFYNLSDLANKDKDYATISFLNWFLDEQVEEEAMFETHIDYLNRIGDDSNTLYLYEKELAARSFDESE.

Residues 2–145 (LNKELLDALN…THIDYLNRIG (144 aa)) form the Ferritin-like diiron domain. Residues glutamate 17, glutamate 50, histidine 53, glutamate 94, and glutamine 127 each contribute to the Fe cation site.

This sequence belongs to the ferritin family. Prokaryotic subfamily.

It is found in the cytoplasm. It carries out the reaction 4 Fe(2+) + O2 + 6 H2O = 4 iron(III) oxide-hydroxide + 12 H(+). Functionally, iron-storage protein. This Staphylococcus saprophyticus subsp. saprophyticus (strain ATCC 15305 / DSM 20229 / NCIMB 8711 / NCTC 7292 / S-41) protein is Bacterial non-heme ferritin (ftnA).